The sequence spans 500 residues: Carnosic acid synthase (500 aa).

Residues 4 to 24 form a helical membrane-spanning segment; sequence LILLSLAFLASCVVAYSRRRP. Cys-443 is a heme binding site.

Belongs to the cytochrome P450 family. It depends on heme as a cofactor. Expressed in leaf glandular trichomes.

The protein resides in the membrane. The enzyme catalyses 11-hydroxyferruginol + 3 reduced [NADPH--hemoprotein reductase] + 3 O2 = carnosate + 3 oxidized [NADPH--hemoprotein reductase] + 4 H2O + 4 H(+). The catalysed reaction is miltiradiene + 2 reduced [NADPH--hemoprotein reductase] + 2 O2 = miltiradien-20-al + 2 oxidized [NADPH--hemoprotein reductase] + 3 H2O + 2 H(+). It catalyses the reaction ferruginol + 3 reduced [NADPH--hemoprotein reductase] + 3 O2 = pisiferate + 3 oxidized [NADPH--hemoprotein reductase] + 4 H2O + 4 H(+). The protein operates within secondary metabolite biosynthesis; terpenoid biosynthesis. Monooxygenase involved in the biosynthesis of carnosate, a potent antioxidant labdane-related diterpene natural product. Catalyzes the oxidation of 11-hydroxyferruginol to produce carnosate. Mediates the conversion of miltiradien into miltiradien-20-al. Also involved in the production of pisiferic acid and derivative products from ferruginol. The chain is Carnosic acid synthase from Salvia pomifera (Apple sage).